Reading from the N-terminus, the 61-residue chain is Large ribosomal subunit protein bL32 (61 aa).

Belongs to the bacterial ribosomal protein bL32 family.

The protein is Large ribosomal subunit protein bL32 of Cytophaga hutchinsonii (strain ATCC 33406 / DSM 1761 / CIP 103989 / NBRC 15051 / NCIMB 9469 / D465).